The chain runs to 357 residues: MKLKLVAVAVTTLLAAGAVNAAEVYNKDGNKLDLYGKVHAQHYFSDDTGSDGDKTYARLGFKGETQINDQLTGFGQWEYEFKGNRSENQGSDKDKTRLAFAGLKFAEFGSFDYGRNYGVAYDIGAWTDVLPEFGGDTWTQTDVFMTGRTTGVATYRNTDFFGLVEGLNFAAQYQGKNDRDGVQEANGDGFGLSATYEYEGFGVGATYAKSDRTDKQVNAASNFNANGKNAEVWAAGLKYDANDIYLAATYSETLNMTTFGDDHIANKTQNFEAVAQYQFDFGLRPSIAYLKSKGKDIGSWGDQDLVEYIDLGATYYFNKNMSTFVDYKINLLDDTNFTKDARVSTDNVVAVGLNYQF.

An N-terminal signal peptide occupies residues 1–21 (MKLKLVAVAVTTLLAAGAVNA).

Belongs to the Gram-negative porin family. As to quaternary structure, homotrimer.

The protein localises to the cell outer membrane. In terms of biological role, forms pores that allow passive diffusion of small molecules across the outer membrane. This chain is Outer membrane porin protein OmpD (ompD), found in Citrobacter koseri (strain ATCC BAA-895 / CDC 4225-83 / SGSC4696).